The sequence spans 616 residues: Chaperone protein HscA (616 aa).

The protein belongs to the heat shock protein 70 family.

In terms of biological role, chaperone involved in the maturation of iron-sulfur cluster-containing proteins. Has a low intrinsic ATPase activity which is markedly stimulated by HscB. Involved in the maturation of IscU. This is Chaperone protein HscA from Shigella flexneri serotype 5b (strain 8401).